The following is a 47-amino-acid chain: PhoP/PhoQ regulator MgrB (47 aa).

A helical membrane pass occupies residues 6–26 (WVVLGIVVVVCLLLWAQVFNI).

This sequence belongs to the MgrB family. In terms of assembly, may form homooligomers. Probably interacts with the periplasmic domain of PhoQ.

The protein localises to the cell inner membrane. Functionally, phoP-regulated transcription is redox-sensitive, being activated when the periplasm becomes more reducing. MgrB acts between DsbA/DsbB and PhoP/PhoQ in this pathway. Represses PhoP/PhoQ signaling, possibly by binding to the periplasmic domain of PhoQ, altering its activity and that of downstream effector PhoP. The chain is PhoP/PhoQ regulator MgrB from Salmonella gallinarum (strain 287/91 / NCTC 13346).